Consider the following 270-residue polypeptide: Protein-ADP-ribose hydrolase (270 aa).

Positions 73-267 (VSVKDCQKTN…LYDTYLQKEN (195 aa)) constitute a Macro domain. The ADP-D-ribose site is built by Asp92, Ile93, and Asn106. Cys112, His117, and Cys119 together coordinate Zn(2+). Residues Cys119, Ile120, Asp121, Ser212, Thr213, Gly214, Glu215, and Phe216 each coordinate ADP-D-ribose.

The protein belongs to the MacroD-type family. Zn-Macro subfamily. Monomer. Interacts with the lipoylated form of GcvH-L. Requires Zn(2+) as cofactor.

The enzyme catalyses 4-O-(ADP-D-ribosyl)-L-aspartyl-[protein] + H2O = L-aspartyl-[protein] + ADP-D-ribose + H(+). The catalysed reaction is 5-O-(ADP-D-ribosyl)-L-glutamyl-[protein] + H2O = L-glutamyl-[protein] + ADP-D-ribose + H(+). It catalyses the reaction S-(ADP-D-ribosyl)-L-cysteinyl-[protein] + H2O = ADP-D-ribose + L-cysteinyl-[protein]. Functionally, ADP-ribosylhydrolase that specifically reverses the SirTM-mediated mono-ADP-ribosylation at an asparatate residue of GcvH-L (SpyM50867), by releasing ADP-ribose from the target protein. May play a role in the regulation of the response to host-induced oxidative stress. It can also hydrolyze ADP-ribosyl-glutamate bonds and ADP-ribosyl-cysteine bonds. In vitro, it can remove the ADP-ribosyl modification from the human mono-ADP-ribosylated PARP1 E988Q mutant, which is primarily modified on glutamate site with only minor aspartate contribution. It can also hydrolyze the ADP-ribosyl-cysteinyl glycosidic bond of a Cys-ADP-ribosylated synthetic peptide. This is Protein-ADP-ribose hydrolase from Streptococcus pyogenes serotype M5 (strain Manfredo).